Here is a 162-residue protein sequence, read N- to C-terminus: Cyclic pyranopterin monophosphate synthase (162 aa).

Substrate-binding positions include 75–77 (MCH) and 115–116 (ME). D130 is an active-site residue.

It belongs to the MoaC family. Homohexamer; trimer of dimers.

The catalysed reaction is (8S)-3',8-cyclo-7,8-dihydroguanosine 5'-triphosphate = cyclic pyranopterin phosphate + diphosphate. It functions in the pathway cofactor biosynthesis; molybdopterin biosynthesis. Functionally, catalyzes the conversion of (8S)-3',8-cyclo-7,8-dihydroguanosine 5'-triphosphate to cyclic pyranopterin monophosphate (cPMP). The polypeptide is Cyclic pyranopterin monophosphate synthase (Geobacillus thermodenitrificans (strain NG80-2)).